A 220-amino-acid chain; its full sequence is Small ribosomal subunit protein uS3c (220 aa).

Residues 48–119 form the KH type-2 domain; it reads VQKHTNNPFH…KLCLILIKID (72 aa).

It belongs to the universal ribosomal protein uS3 family. Part of the 30S ribosomal subunit.

It localises to the plastid. The protein resides in the chloroplast. The protein is Small ribosomal subunit protein uS3c (rps3) of Psilotum nudum (Whisk fern).